The chain runs to 270 residues: Tryptophan synthase alpha chain (270 aa).

Residues Glu-49 and Asp-60 each act as proton acceptor in the active site.

It belongs to the TrpA family. As to quaternary structure, tetramer of two alpha and two beta chains.

It catalyses the reaction (1S,2R)-1-C-(indol-3-yl)glycerol 3-phosphate + L-serine = D-glyceraldehyde 3-phosphate + L-tryptophan + H2O. It participates in amino-acid biosynthesis; L-tryptophan biosynthesis; L-tryptophan from chorismate: step 5/5. Its function is as follows. The alpha subunit is responsible for the aldol cleavage of indoleglycerol phosphate to indole and glyceraldehyde 3-phosphate. This chain is Tryptophan synthase alpha chain, found in Pseudomonas syringae pv. tomato (strain ATCC BAA-871 / DC3000).